The following is a 66-amino-acid chain: Large ribosomal subunit protein uL29 (66 aa).

It belongs to the universal ribosomal protein uL29 family.

This is Large ribosomal subunit protein uL29 from Pseudothermotoga lettingae (strain ATCC BAA-301 / DSM 14385 / NBRC 107922 / TMO) (Thermotoga lettingae).